Here is a 457-residue protein sequence, read N- to C-terminus: Bifunctional protein GlmU (457 aa).

The segment at 1-229 (MYNCAIILAA…YEEIMGVNSR (229 aa)) is pyrophosphorylase. Residues 8–11 (LAAG), K22, Q73, and 78–79 (GT) each bind UDP-N-acetyl-alpha-D-glucosamine. D103 contacts Mg(2+). G140, E155, N170, and N227 together coordinate UDP-N-acetyl-alpha-D-glucosamine. Mg(2+) is bound at residue N227. The segment at 230–250 (VQLSEAEIVMRKRINHKHMVN) is linker. The segment at 251–457 (GVTFIDCEST…WLDKKGLLKK (207 aa)) is N-acetyltransferase. Positions 332 and 350 each coordinate UDP-N-acetyl-alpha-D-glucosamine. H362 (proton acceptor) is an active-site residue. The UDP-N-acetyl-alpha-D-glucosamine site is built by Y365 and N376. Residues 385–386 (NY), A422, and R439 contribute to the acetyl-CoA site.

In the N-terminal section; belongs to the N-acetylglucosamine-1-phosphate uridyltransferase family. This sequence in the C-terminal section; belongs to the transferase hexapeptide repeat family. In terms of assembly, homotrimer. Mg(2+) serves as cofactor.

The protein resides in the cytoplasm. The catalysed reaction is alpha-D-glucosamine 1-phosphate + acetyl-CoA = N-acetyl-alpha-D-glucosamine 1-phosphate + CoA + H(+). The enzyme catalyses N-acetyl-alpha-D-glucosamine 1-phosphate + UTP + H(+) = UDP-N-acetyl-alpha-D-glucosamine + diphosphate. It participates in nucleotide-sugar biosynthesis; UDP-N-acetyl-alpha-D-glucosamine biosynthesis; N-acetyl-alpha-D-glucosamine 1-phosphate from alpha-D-glucosamine 6-phosphate (route II): step 2/2. Its pathway is nucleotide-sugar biosynthesis; UDP-N-acetyl-alpha-D-glucosamine biosynthesis; UDP-N-acetyl-alpha-D-glucosamine from N-acetyl-alpha-D-glucosamine 1-phosphate: step 1/1. The protein operates within bacterial outer membrane biogenesis; LPS lipid A biosynthesis. In terms of biological role, catalyzes the last two sequential reactions in the de novo biosynthetic pathway for UDP-N-acetylglucosamine (UDP-GlcNAc). The C-terminal domain catalyzes the transfer of acetyl group from acetyl coenzyme A to glucosamine-1-phosphate (GlcN-1-P) to produce N-acetylglucosamine-1-phosphate (GlcNAc-1-P), which is converted into UDP-GlcNAc by the transfer of uridine 5-monophosphate (from uridine 5-triphosphate), a reaction catalyzed by the N-terminal domain. This chain is Bifunctional protein GlmU, found in Clostridium botulinum (strain Kyoto / Type A2).